A 504-amino-acid chain; its full sequence is MSQPRTPEQALDTPGDCPPGRRDEDAGEGIQCSQRMLSFSDALLSIIATVMILPVTHTEISPEQQFDRSVQRLLATRIAVYLMTFLIVTVAWAAHTRLFQVVGKTDDTLALLNLACMMTITFLPYTFSLMVTFPDVPLGIFLFCVCVIAIGVVQALIVGYAFHFPHLLSPQIQRSAHRALYRRHVLGIVLQGPALCFAAAIFSLFFVPLSYLLMVTVILLPYVSKVTGWCRDRLLGHREPSAHPVEVFSFDLHEPLSKERVEAFSDGVYAIVATLLILDICEDNVPDPKDVKERFSGSLVAALSATGPRFLAYFGSFATVGLLWFAHHSLFLHVRKATRAMGLLNTLSLAFVGGLPLAYQQTSAFARQPRDELERVRVSCTIIFLASIFQLAMWTTALLHQAETLQPSVWFGGREHVLMFAKLALYPCASLLAFASTCLLSRFSVGIFHLMQIAVPCAFLLLRLLVGLALATLRVLRGLARPEHPPPAPTGQDDPQSQLLPAPC.

The segment at 1 to 27 (MSQPRTPEQALDTPGDCPPGRRDEDAG) is disordered. Residues 1 to 33 (MSQPRTPEQALDTPGDCPPGRRDEDAGEGIQCS) lie on the Cytoplasmic side of the membrane. Position 6 is a phosphothreonine (T6). A helical transmembrane segment spans residues 34 to 56 (QRMLSFSDALLSIIATVMILPVT). The RxxxFSD motif 1 motif lies at 35 to 41 (RMLSFSD). Over 57–77 (HTEISPEQQFDRSVQRLLATR) the chain is Lumenal. The short helix H1-1 stretch occupies residues 58–63 (TEISPE). The tract at residues 65-71 (QFDRSVQ) is short helix H2-1. A helical membrane pass occupies residues 78–100 (IAVYLMTFLIVTVAWAAHTRLFQ). Residues 101–106 (VVGKTD) lie on the Cytoplasmic side of the membrane. A helical membrane pass occupies residues 107–128 (DTLALLNLACMMTITFLPYTFS). At 129 to 138 (LMVTFPDVPL) the chain is on the lumenal side. The chain crosses the membrane as a helical span at residues 139 to 160 (GIFLFCVCVIAIGVVQALIVGY). Topologically, residues 161–184 (AFHFPHLLSPQIQRSAHRALYRRH) are cytoplasmic. The chain crosses the membrane as a helical span at residues 185-205 (VLGIVLQGPALCFAAAIFSLF). Topologically, residues 206-210 (FVPLS) are lumenal. A helical transmembrane segment spans residues 211–230 (YLLMVTVILLPYVSKVTGWC). Residues 231-257 (RDRLLGHREPSAHPVEVFSFDLHEPLS) lie on the Cytoplasmic side of the membrane. A helical membrane pass occupies residues 258–282 (KERVEAFSDGVYAIVATLLILDICE). A RxxxFSD motif 2 motif is present at residues 260-266 (RVEAFSD). Residues 283 to 309 (DNVPDPKDVKERFSGSLVAALSATGPR) lie on the Lumenal side of the membrane. Positions 288 to 296 (PKDVKERFS) are short helix H1-2. Residues 298 to 304 (SLVAALS) form a short helix H2-2 region. The helical transmembrane segment at 310 to 332 (FLAYFGSFATVGLLWFAHHSLFL) threads the bilayer. The Cytoplasmic segment spans residues 333–338 (HVRKAT). The chain crosses the membrane as a helical span at residues 339-360 (RAMGLLNTLSLAFVGGLPLAYQ). The Lumenal segment spans residues 361-375 (QTSAFARQPRDELER). Residues 376-396 (VRVSCTIIFLASIFQLAMWTT) traverse the membrane as a helical segment. Residues 397-416 (ALLHQAETLQPSVWFGGREH) lie on the Cytoplasmic side of the membrane. Residues 417–440 (VLMFAKLALYPCASLLAFASTCLL) traverse the membrane as a helical segment. The Lumenal segment spans residues 441-442 (SR). Residues 443 to 469 (FSVGIFHLMQIAVPCAFLLLRLLVGLA) form a helical membrane-spanning segment. Residues 470 to 504 (LATLRVLRGLARPEHPPPAPTGQDDPQSQLLPAPC) are Cytoplasmic-facing. The segment at 483–504 (EHPPPAPTGQDDPQSQLLPAPC) is disordered. The segment covering 493 to 504 (DDPQSQLLPAPC) has biased composition (polar residues).

The protein belongs to the TMEM175 family. As to quaternary structure, homodimer. Interacts with AKT (AKT1, AKT2 or AKT3); leading to formation of the lysoK(GF) complex, which activates the channel. Interacts with LAMP1; inhibiting the proton channel activity of TMEM175. Interacts with LAMP2; inhibiting the proton channel activity of TMEM175. In terms of tissue distribution, widely expressed.

Its subcellular location is the endosome membrane. The protein localises to the lysosome membrane. The catalysed reaction is H(+)(in) = H(+)(out). It catalyses the reaction K(+)(in) = K(+)(out). Its activity is regulated as follows. Active at low pH (under pH 4.6): proton channel activity is activated by luminal side protons. Polyunsaturated fatty acids, such as arachidonic acid, also activate the channel activity. Proton channel activity is directly inhibited by LAMP1 or LAMP2, facilitating lysosomal acidification. Channel activity is activated following interaction with AKT (AKT1, AKT2 or AKT3): interaction promotes activation from closed to an open state. Activation by AKT is independent of AKT serine/threonine-protein kinase activity. In terms of biological role, proton-activated proton channel that catalyzes proton efflux from endosomes and lysosomes to maintain a steady-state pH. Activated at low pH (under pH 4.6) by luminal side protons: selectively mediates lysosomal proton release from lysosomes, eliciting a proton leak that balances V-ATPase activity to maintain pH homeostasis. Regulation of lumenal pH stability is required for autophagosome-lysosome fusion. Also acts as a potassium channel at higher pH, regulating potassium conductance in endosomes and lysosomes. Constitutes the pore-forming subunit of the lysoK(GF) complex, a complex activated by extracellular growth factors. The lysoK(GF) complex is composed of TMEM175 and AKT (AKT1, AKT2 or AKT3), a major target of growth factor receptors: in the complex, TMEM175 channel is opened by conformational changes by AKT, leading to its activation. The lysoK(GF) complex is required to protect neurons against stress-induced damage. This Homo sapiens (Human) protein is Endosomal/lysosomal proton channel TMEM175.